The following is a 329-amino-acid chain: Lipoyl synthase (329 aa).

7 residues coordinate [4Fe-4S] cluster: Cys-55, Cys-60, Cys-66, Cys-81, Cys-85, Cys-88, and Ser-292. The 215-residue stretch at 67-281 (WEDREATFLI…RDEAEAIGFL (215 aa)) folds into the Radical SAM core domain.

It belongs to the radical SAM superfamily. Lipoyl synthase family. The cofactor is [4Fe-4S] cluster.

The protein localises to the cytoplasm. It carries out the reaction [[Fe-S] cluster scaffold protein carrying a second [4Fe-4S](2+) cluster] + N(6)-octanoyl-L-lysyl-[protein] + 2 oxidized [2Fe-2S]-[ferredoxin] + 2 S-adenosyl-L-methionine + 4 H(+) = [[Fe-S] cluster scaffold protein] + N(6)-[(R)-dihydrolipoyl]-L-lysyl-[protein] + 4 Fe(3+) + 2 hydrogen sulfide + 2 5'-deoxyadenosine + 2 L-methionine + 2 reduced [2Fe-2S]-[ferredoxin]. The protein operates within protein modification; protein lipoylation via endogenous pathway; protein N(6)-(lipoyl)lysine from octanoyl-[acyl-carrier-protein]: step 2/2. Functionally, catalyzes the radical-mediated insertion of two sulfur atoms into the C-6 and C-8 positions of the octanoyl moiety bound to the lipoyl domains of lipoate-dependent enzymes, thereby converting the octanoylated domains into lipoylated derivatives. The protein is Lipoyl synthase of Leifsonia xyli subsp. xyli (strain CTCB07).